Reading from the N-terminus, the 394-residue chain is Elongation factor Tu 1 (394 aa).

Residues 10-204 (KPHVNVGTIG…HLDTYIPEPE (195 aa)) form the tr-type G domain. A G1 region spans residues 19–26 (GHVDHGKT). 19–26 (GHVDHGKT) provides a ligand contact to GTP. Residue Thr26 coordinates Mg(2+). The interval 60–64 (GITIN) is G2. The interval 81–84 (DCPG) is G3. Residues 81-85 (DCPGH) and 136-139 (NKCD) each bind GTP. The G4 stretch occupies residues 136–139 (NKCD). Residues 174-176 (SAL) are G5.

The protein belongs to the TRAFAC class translation factor GTPase superfamily. Classic translation factor GTPase family. EF-Tu/EF-1A subfamily. Monomer.

The protein localises to the cytoplasm. It catalyses the reaction GTP + H2O = GDP + phosphate + H(+). Functionally, GTP hydrolase that promotes the GTP-dependent binding of aminoacyl-tRNA to the A-site of ribosomes during protein biosynthesis. The protein is Elongation factor Tu 1 of Haemophilus influenzae (strain 86-028NP).